Consider the following 144-residue polypeptide: Putative pre-16S rRNA nuclease (144 aa).

Belongs to the YqgF nuclease family.

It localises to the cytoplasm. Its function is as follows. Could be a nuclease involved in processing of the 5'-end of pre-16S rRNA. This is Putative pre-16S rRNA nuclease from Pseudomonas paraeruginosa (strain DSM 24068 / PA7) (Pseudomonas aeruginosa (strain PA7)).